A 643-amino-acid chain; its full sequence is uncharacterized protein (643 aa).

Residues 561–643 (LNQELETSSE…GADRKKRGVY (83 aa)) are disordered. The segment covering 591–606 (SRGGRGGRGARGGNRG) has biased composition (gly residues). A compositionally biased stretch (basic and acidic residues) spans 617-635 (GHDRQMKEKHKSDIKQRGA).

This is an uncharacterized protein from Caenorhabditis elegans.